Consider the following 138-residue polypeptide: Small ribosomal subunit protein uS11c (138 aa).

This sequence belongs to the universal ribosomal protein uS11 family. In terms of assembly, part of the 30S ribosomal subunit.

It localises to the plastid. The protein resides in the chloroplast. The sequence is that of Small ribosomal subunit protein uS11c from Phalaenopsis aphrodite subsp. formosana (Moth orchid).